A 241-amino-acid polypeptide reads, in one-letter code: UPF0173 metal-dependent hydrolase Haur_4333 (241 aa).

The protein belongs to the UPF0173 family.

The protein is UPF0173 metal-dependent hydrolase Haur_4333 of Herpetosiphon aurantiacus (strain ATCC 23779 / DSM 785 / 114-95).